The sequence spans 102 residues: Synaptobrevin-like protein 5 (102 aa).

A v-SNARE coiled-coil homology domain is found at 17–77 (KIMRTRRELD…VKIKREMSWK (61 aa)).

The chain is Synaptobrevin-like protein 5 (snb-5) from Caenorhabditis elegans.